A 63-amino-acid chain; its full sequence is Large ribosomal subunit protein bL32 (63 aa).

The interval 1–27 (MANPKAKMSKSRRDKRRAQFNARTKPA) is disordered. Positions 7-18 (KMSKSRRDKRRA) are enriched in basic residues.

This sequence belongs to the bacterial ribosomal protein bL32 family.

The chain is Large ribosomal subunit protein bL32 from Pelodictyon phaeoclathratiforme (strain DSM 5477 / BU-1).